The primary structure comprises 370 residues: MLGAVEGPRWKQAEDIRDIYDFRDVLGTGAFSEVILAEDKRTQKLVAIKCIAKEALEGKEGSMENEIAVLHKIKHPNIVALDDIYESGGHLYLIMQLVSGGELFDRIVEKGFYTERDASRLIFQVLDAVKYLHDLGIVHRDLKPENLLYYSLDEDSKIMISDFGLSKMEDPGSVLSTACGTPGYVAPEVLAQKPYSKAVDCWSIGVIAYILLCGYPPFYDENDAKLFEQILKAEYEFDSPYWDDISDSAKDFIRHLMEKDPEKRFTCEQALQHPWIAGDTALDKNIHQSVSEQIKKNFAKSKWKQAFNATAVVRHMRKLQLGTSQEGQGQTASHGELLTPVAGGPAAGCCCRDCCVEPGTELSPTLPHQL.

The region spanning 20–276 is the Protein kinase domain; it reads YDFRDVLGTG…CEQALQHPWI (257 aa). ATP is bound by residues 26–34 and Lys49; that span reads LGTGAFSEV. Residue Lys59 forms a Glycyl lysine isopeptide (Lys-Gly) (interchain with G-Cter in ubiquitin) linkage. Asp141 serves as the catalytic Proton acceptor. Thr177 is modified (phosphothreonine; by CaMKK1 and CaMKK2). The tract at residues 276–316 is autoinhibitory domain; that stretch reads IAGDTALDKNIHQSVSEQIKKNFAKSKWKQAFNATAVVRHM. A calmodulin-binding region spans residues 296–317; sequence KNFAKSKWKQAFNATAVVRHMR. Positions 315–321 match the Nuclear export signal motif; it reads HMRKLQL. Phosphoserine is present on Ser363.

Belongs to the protein kinase superfamily. CAMK Ser/Thr protein kinase family. CaMK subfamily. Monomer. Interacts with XPO1. Interacts with MARK2, ARHGEF7/BETAPIX and GIT1. Post-translationally, phosphorylated by CaMKK1 and CaMKK2 on Thr-177. Polybiquitinated by the E3 ubiquitin-protein ligase complex SCF(FBXL12), leading to proteasomal degradation. As to expression, widely expressed. Expressed in cells of the zona glomerulosa of the adrenal cortex.

The protein localises to the cytoplasm. It localises to the nucleus. It catalyses the reaction L-seryl-[protein] + ATP = O-phospho-L-seryl-[protein] + ADP + H(+). The catalysed reaction is L-threonyl-[protein] + ATP = O-phospho-L-threonyl-[protein] + ADP + H(+). Its activity is regulated as follows. Activated by Ca(2+)/calmodulin. Binding of calmodulin results in conformational change that relieves intrasteric autoinhibition and allows phosphorylation of Thr-177 within the activation loop by CaMKK1 or CaMKK2. Phosphorylation of Thr-177 results in several fold increase in total activity. Unlike CaMK4, is unable to exhibit autonomous activity after Ca(2+)/calmodulin activation. In terms of biological role, calcium/calmodulin-dependent protein kinase that operates in the calcium-triggered CaMKK-CaMK1 signaling cascade and, upon calcium influx, regulates transcription activators activity, cell cycle, hormone production, cell differentiation, actin filament organization and neurite outgrowth. Recognizes the substrate consensus sequence [MVLIF]-x-R-x(2)-[ST]-x(3)-[MVLIF]. Regulates axonal extension and growth cone motility in hippocampal and cerebellar nerve cells. Upon NMDA receptor-mediated Ca(2+) elevation, promotes dendritic growth in hippocampal neurons and is essential in synapses for full long-term potentiation (LTP) and ERK2-dependent translational activation. Downstream of NMDA receptors, promotes the formation of spines and synapses in hippocampal neurons by phosphorylating ARHGEF7/BETAPIX on 'Ser-694', which results in the enhancement of ARHGEF7 activity and activation of RAC1. Promotes neuronal differentiation and neurite outgrowth by activation and phosphorylation of MARK2 on 'Ser-91', 'Ser-92', 'Ser-93' and 'Ser-294'. Promotes nuclear export of HDAC5 and binding to 14-3-3 by phosphorylation of 'Ser-259' and 'Ser-498' in the regulation of muscle cell differentiation. Regulates NUMB-mediated endocytosis by phosphorylation of NUMB on 'Ser-276' and 'Ser-295'. Involved in the regulation of basal and estrogen-stimulated migration of medulloblastoma cells through ARHGEF7/BETAPIX phosphorylation. Is required for proper activation of cyclin-D1/CDK4 complex during G1 progression in diploid fibroblasts. Plays a role in K(+) and ANG2-mediated regulation of the aldosterone synthase (CYP11B2) to produce aldosterone in the adrenal cortex. Phosphorylates EIF4G3/eIF4GII. In vitro phosphorylates CREB1, ATF1, CFTR, MYL9 and SYN1/synapsin I. The sequence is that of Calcium/calmodulin-dependent protein kinase type 1 (CAMK1) from Homo sapiens (Human).